The chain runs to 262 residues: Octopine permease ATP-binding protein P (262 aa).

The ABC transporter domain occupies 9 to 254 (VKLTGIRKNF…PRTERFRQFL (246 aa)). Position 41–48 (41–48 (GSSGSGKS)) interacts with ATP.

It belongs to the ABC transporter superfamily.

Its subcellular location is the cell inner membrane. In terms of biological role, component of the octopine active transport system probably consisting of four subunits: Q, M, P and T. This Rhizobium meliloti (Ensifer meliloti) protein is Octopine permease ATP-binding protein P (occP).